Reading from the N-terminus, the 157-residue chain is Small ribosomal subunit protein uS7 (157 aa).

This sequence belongs to the universal ribosomal protein uS7 family. In terms of assembly, part of the 30S ribosomal subunit. Contacts proteins S9 and S11.

Its function is as follows. One of the primary rRNA binding proteins, it binds directly to 16S rRNA where it nucleates assembly of the head domain of the 30S subunit. Is located at the subunit interface close to the decoding center, probably blocks exit of the E-site tRNA. This chain is Small ribosomal subunit protein uS7, found in Borrelia duttonii (strain Ly).